Consider the following 427-residue polypeptide: Glutamate-1-semialdehyde 2,1-aminomutase (427 aa).

Lys265 carries the post-translational modification N6-(pyridoxal phosphate)lysine.

It belongs to the class-III pyridoxal-phosphate-dependent aminotransferase family. HemL subfamily. Homodimer. Pyridoxal 5'-phosphate serves as cofactor.

The protein localises to the cytoplasm. The catalysed reaction is (S)-4-amino-5-oxopentanoate = 5-aminolevulinate. It functions in the pathway porphyrin-containing compound metabolism; protoporphyrin-IX biosynthesis; 5-aminolevulinate from L-glutamyl-tRNA(Glu): step 2/2. The protein is Glutamate-1-semialdehyde 2,1-aminomutase of Burkholderia cenocepacia (strain ATCC BAA-245 / DSM 16553 / LMG 16656 / NCTC 13227 / J2315 / CF5610) (Burkholderia cepacia (strain J2315)).